The primary structure comprises 151 residues: 3-dehydroquinate dehydratase (151 aa).

The active-site Proton acceptor is Tyr26. Residues Asn75, His81, and Asp88 each contribute to the substrate site. His101 serves as the catalytic Proton donor. Substrate contacts are provided by residues 102 to 103 (LS) and Arg112.

The protein belongs to the type-II 3-dehydroquinase family. As to quaternary structure, homododecamer.

The enzyme catalyses 3-dehydroquinate = 3-dehydroshikimate + H2O. Its pathway is metabolic intermediate biosynthesis; chorismate biosynthesis; chorismate from D-erythrose 4-phosphate and phosphoenolpyruvate: step 3/7. Functionally, catalyzes a trans-dehydration via an enolate intermediate. This chain is 3-dehydroquinate dehydratase, found in Shewanella halifaxensis (strain HAW-EB4).